A 248-amino-acid chain; its full sequence is Probable transcriptional regulatory protein Smed_2641 (248 aa).

This sequence belongs to the TACO1 family.

The protein resides in the cytoplasm. This chain is Probable transcriptional regulatory protein Smed_2641, found in Sinorhizobium medicae (strain WSM419) (Ensifer medicae).